We begin with the raw amino-acid sequence, 347 residues long: UPF0284 protein LS215_0030 (347 aa).

The protein belongs to the UPF0284 family.

The sequence is that of UPF0284 protein LS215_0030 from Saccharolobus islandicus (strain L.S.2.15 / Lassen #1) (Sulfolobus islandicus).